A 474-amino-acid chain; its full sequence is 2-succinylbenzoate--CoA ligase (474 aa).

It belongs to the ATP-dependent AMP-binding enzyme family. MenE subfamily.

It carries out the reaction 2-succinylbenzoate + ATP + CoA = 2-succinylbenzoyl-CoA + AMP + diphosphate. It functions in the pathway quinol/quinone metabolism; 1,4-dihydroxy-2-naphthoate biosynthesis; 1,4-dihydroxy-2-naphthoate from chorismate: step 5/7. The protein operates within quinol/quinone metabolism; menaquinone biosynthesis. Functionally, converts 2-succinylbenzoate (OSB) to 2-succinylbenzoyl-CoA (OSB-CoA). This Staphylococcus epidermidis (strain ATCC 12228 / FDA PCI 1200) protein is 2-succinylbenzoate--CoA ligase.